A 238-amino-acid chain; its full sequence is MPIRLYLIWGATTTGKTAQSVALARATGAPVISLDRVQCCHELAVGSGRPLPSELLGTRREYLCDRSVSSGVIPAADANQLLFDKVVRYSAHERALILEGGSVSLINAMIRDARWSALGEWALRRIVLPGRAVFIAQAIKRVRDMLEPPPGHASILDELEGLWAHPGNHAVLEDVDGYRQIIRYARASQVPIDRITSIDRSTMATLVERIAQEYWEHALWQEQEFLGIPATWRRADDA.

This sequence belongs to the isopentenyl transferase family.

The catalysed reaction is dimethylallyl diphosphate + AMP = N(6)-(dimethylallyl)adenosine 5'-phosphate + diphosphate. Functionally, transfers dimethylallyl groups to AMP as part of the biosynthesis of cytokinin phytohormones. This is Adenylate dimethylallyltransferase (tzs) from Ralstonia solanacearum (Pseudomonas solanacearum).